The sequence spans 162 residues: uncharacterized protein (162 aa).

Transmembrane regions (helical) follow at residues 15-40 (TIYS…YFLL), 47-66 (ISML…TTAL), 76-98 (YSIL…FLVY), 105-124 (KWLG…DPLL), and 128-150 (GYAV…WLVI).

The protein resides in the cell membrane. This is an uncharacterized protein from Archaeoglobus fulgidus (strain ATCC 49558 / DSM 4304 / JCM 9628 / NBRC 100126 / VC-16).